The chain runs to 46 residues: Denclatoxin-B (46 aa).

3 disulfides stabilise this stretch: Cys3–Cys40, Cys4–Cys32, and Cys16–Cys26.

This sequence belongs to the plant thionin (TC 1.C.44) family.

It is found in the secreted. Functionally, thionins are small plant proteins which are toxic to animal cells. They seem to exert their toxic effect at the level of the cell membrane. Their precise function is not known. The polypeptide is Denclatoxin-B (Dendrophthora clavata (Columbian mistletoe)).